Reading from the N-terminus, the 349-residue chain is DENN domain-containing protein 10 (349 aa).

Residues 1 to 135 (MATPELMLSL…TKGICQSDEN (135 aa)) form the uDENN domain. Positions 160 to 294 (QFGMETIILY…ADRSDAQVIK (135 aa)) constitute a cDENN domain. The dDENN domain occupies 296-349 (ISVKTKEILSNLMSLADHADNSKLTLECLKQGHYPPATENFLFHLAAAEQLLKI).

The protein belongs to the DENND10 family.

The protein resides in the late endosome. Functionally, guanine nucleotide exchange factor (GEF) which may be involved in the regulation of late endocytic pathway homeostasis, including endosomal positioning, maturation and secretion. This chain is DENN domain-containing protein 10 (dennd10), found in Danio rerio (Zebrafish).